We begin with the raw amino-acid sequence, 258 residues long: Venom plasminogen activator TSV-PA (258 aa).

A signal peptide spans 1-18 (MELIRVLANLLILQLSYA). Residues 19-24 (QKSSEL) constitute a propeptide that is removed on maturation. In terms of domain architecture, Peptidase S1 spans 25–249 (VFGGDECNIN…YLDWIKSIIA (225 aa)). 6 cysteine pairs are disulfide-bonded: cysteine 31-cysteine 163, cysteine 50-cysteine 66, cysteine 98-cysteine 256, cysteine 142-cysteine 210, cysteine 174-cysteine 189, and cysteine 200-cysteine 225. Residues histidine 65 and aspartate 110 each act as charge relay system in the active site. N-linked (GlcNAc...) asparagine glycosylation is present at asparagine 185. The active-site Charge relay system is serine 204.

The protein belongs to the peptidase S1 family. Snake venom subfamily. Monomer. Expressed by the venom gland.

It is found in the secreted. Functionally, snake venom serine protease that activates plasminogen. This is Venom plasminogen activator TSV-PA from Trimeresurus stejnegeri (Chinese green tree viper).